The chain runs to 721 residues: Exocyst complex component 3-like protein 4 (721 aa).

Disordered stretches follow at residues 1 to 52 and 94 to 135; these read MPLP…SLGM and GLTA…QAES. Residues 22–37 are compositionally biased toward polar residues; it reads SQTLPVTTWKSNSMKE. A Phosphoserine modification is found at S515.

The protein belongs to the SEC6 family.

This Mus musculus (Mouse) protein is Exocyst complex component 3-like protein 4 (Exoc3l4).